Here is a 318-residue protein sequence, read N- to C-terminus: MFKNNLRFTSWINQHKFYQLDLSLKTRSIKQIVLTLVFKTLVLGFFGLIVIFPFYLMVVVSFASDERALDTRTPILWPDSWNFDNFSRVLSDGKYLNAIVVNTLVTVLSVLLTLFFTICMGYSFSLRKWKYKKLVWFFFLSVLILPESALLIGQYRIVIVANWNNPNSPLIVLGLIMPFVSSVFSGFMYRTSFEAIPSQLKESALIDGCNGFNYFLKIALPMVKSTSWTVGILTAFSAWNSYLWPLLLLGNRVDLNINLWVLQQGILDANSSDEQIRTLLNLKMSAAILAILPMFIIYFLFHKRIMNAIKNRANTIKG.

Transmembrane regions (helical) follow at residues 42-62, 98-118, 134-154, 169-189, 230-250, and 282-302; these read VLGF…VVSF, AIVV…FFTI, LVWF…LIGQ, PLIV…GFMY, VGIL…LLLG, and LKMS…FLFH. The ABC transmembrane type-1 domain occupies 99–301; that stretch reads IVVNTLVTVL…LPMFIIYFLF (203 aa).

The protein belongs to the binding-protein-dependent transport system permease family. MalFG subfamily.

It is found in the cell membrane. Probably part of a binding-protein-dependent transport system. Probably responsible for the translocation of the substrate across the membrane. This is Probable ABC transporter permease protein MG189 from Mycoplasma genitalium (strain ATCC 33530 / DSM 19775 / NCTC 10195 / G37) (Mycoplasmoides genitalium).